A 96-amino-acid polypeptide reads, in one-letter code: Large ribosomal subunit protein bL27 (96 aa).

Positions methionine 1–phenylalanine 9 are excised as a propeptide. The disordered stretch occupies residues glycine 14 to aspartate 35.

It belongs to the bacterial ribosomal protein bL27 family. Post-translationally, the N-terminus is cleaved by ribosomal processing cysteine protease Prp.

This Bacillus cytotoxicus (strain DSM 22905 / CIP 110041 / 391-98 / NVH 391-98) protein is Large ribosomal subunit protein bL27.